The following is a 273-amino-acid chain: 3-keto-5-aminohexanoate cleavage enzyme (273 aa).

(5S)-5-amino-3-oxohexanoate is bound at residue E14. 2 residues coordinate Zn(2+): H46 and H48. (5S)-5-amino-3-oxohexanoate-binding residues include S82, G85, and S106. E227 contacts Zn(2+).

The protein belongs to the BKACE family. Kce subfamily. Homotetramer. Zn(2+) is required as a cofactor.

It catalyses the reaction (5S)-5-amino-3-oxohexanoate + acetyl-CoA = (3S)-3-aminobutanoyl-CoA + acetoacetate. It functions in the pathway amino-acid degradation; L-lysine degradation via acetate pathway. In terms of biological role, involved in the anaerobic fermentation of lysine. Catalyzes the reversible reaction between 3-keto-5-aminohexanoate (KAH) and acetyl-CoA to form 3-aminobutyryl-CoA and acetoacetate. The reaction involves the deprotonation of KAH, the nucleophilic addition onto acetyl-CoA and the intramolecular transfer of the CoA moiety. The chain is 3-keto-5-aminohexanoate cleavage enzyme from Acetoanaerobium sticklandii (strain ATCC 12662 / DSM 519 / JCM 1433 / CCUG 9281 / NCIMB 10654 / HF) (Clostridium sticklandii).